Consider the following 255-residue polypeptide: MEYAILFATSLVITVLAASGFAPAHGWNKGTATFYGGADASGTMGGACGYGNLYTAGYGTNTAALSSVLFNDGWSCGQCYLIMCDAAATPQWCRAGAAVTITATNLCPPNWALPSNSGGWCNPPRPHFDMAEPAWLQIGIYKAGIIPVLYQQVKCWRQGGIRFTMGGFNFFELVLVSNVAGSGSVRSVSVKGGSTGWITLNRNWGANWQCNSGLVGQALSFAVTSTGGQTLYIYNVVPSWWSFGMTFTSNQQFSY.

A signal peptide spans 1 to 26 (MEYAILFATSLVITVLAASGFAPAHG). The 116-residue stretch at 45-160 (GGACGYGNLY…QQVKCWRQGG (116 aa)) folds into the Expansin-like EG45 domain. In terms of domain architecture, Expansin-like CBD spans 170-249 (FFELVLVSNV…WWSFGMTFTS (80 aa)).

It belongs to the expansin family. Expansin A subfamily. Expressed in panicles and flowers.

It localises to the secreted. It is found in the cell wall. The protein localises to the membrane. In terms of biological role, may cause loosening and extension of plant cell walls by disrupting non-covalent bonding between cellulose microfibrils and matrix glucans. No enzymatic activity has been found. May be required for rapid internodal elongation in deepwater rice during submergence. The chain is Expansin-A25 (EXPA25) from Oryza sativa subsp. japonica (Rice).